The primary structure comprises 174 residues: Endoribonuclease YbeY (174 aa).

Residues His129, His133, and His139 each contribute to the Zn(2+) site.

The protein belongs to the endoribonuclease YbeY family. The cofactor is Zn(2+).

Its subcellular location is the cytoplasm. Its function is as follows. Single strand-specific metallo-endoribonuclease involved in late-stage 70S ribosome quality control and in maturation of the 3' terminus of the 16S rRNA. In Lactobacillus delbrueckii subsp. bulgaricus (strain ATCC 11842 / DSM 20081 / BCRC 10696 / JCM 1002 / NBRC 13953 / NCIMB 11778 / NCTC 12712 / WDCM 00102 / Lb 14), this protein is Endoribonuclease YbeY.